Consider the following 781-residue polypeptide: Serine/threonine-protein kinase PLK4 (781 aa).

One can recognise a Protein kinase domain in the interval 14-268; it reads YEVQHLLGKG…LEQVLRHPFM (255 aa). Residues 20 to 28 and K43 contribute to the ATP site; that span reads LGKGGFACV. D139 serves as the catalytic Proton acceptor. The 118-residue stretch at 397 to 514 folds into the Cryptic POLO box 1 (CPB1) domain; the sequence is TEHISVPPLN…ARFVGLVKSK (118 aa). The disordered stretch occupies residues 463-486; that stretch reads QPDPGRGLPIQEQTSETHSSGTDN. Polar residues predominate over residues 473–486; sequence QEQTSETHSSGTDN. The Cryptic POLO box 2 (CPB2) domain occupies 515 to 618; that stretch reads TPKVTYFSAL…GRRPVVEVLP (104 aa). One can recognise a POLO box domain in the interval 672 to 751; it reads PIKRLNVPGV…LPQVQMKLRC (80 aa).

Belongs to the protein kinase superfamily. Ser/Thr protein kinase family. CDC5/Polo subfamily. As to quaternary structure, homodimer. Ubiquitinated by the SCF(Slimb) ubiquitin ligase complex; leading to its degradation by the proteasome during interphase and regulating centriole number and ensuring the block to centriole reduplication.

It localises to the cytoplasm. The protein localises to the cytoskeleton. The protein resides in the microtubule organizing center. Its subcellular location is the centrosome. It is found in the centriole. It carries out the reaction L-seryl-[protein] + ATP = O-phospho-L-seryl-[protein] + ADP + H(+). It catalyses the reaction L-threonyl-[protein] + ATP = O-phospho-L-threonyl-[protein] + ADP + H(+). In terms of biological role, serine/threonine-protein kinase that plays a central role in centriole duplication. Able to trigger procentriole formation on the surface of the mother centriole cylinder, using mother centriole as a platform, leading to the recruitment of centriole biogenesis proteins such as sas-6. When overexpressed, it is able to induce centrosome amplification through the simultaneous generation of multiple procentrioles adjoining each parental centriole during S phase. Centrosome amplification following overexpression can initiate tumorigenesis, highlighting the importance of centrosome regulation in cancers. The protein is Serine/threonine-protein kinase PLK4 (SAK) of Drosophila virilis (Fruit fly).